The sequence spans 326 residues: 4-hydroxythreonine-4-phosphate dehydrogenase (326 aa).

Positions 133 and 134 each coordinate substrate. 3 residues coordinate a divalent metal cation: H163, H208, and H263. Positions 271, 280, and 289 each coordinate substrate.

This sequence belongs to the PdxA family. Homodimer. It depends on Zn(2+) as a cofactor. Mg(2+) is required as a cofactor. Co(2+) serves as cofactor.

The protein resides in the cytoplasm. The catalysed reaction is 4-(phosphooxy)-L-threonine + NAD(+) = 3-amino-2-oxopropyl phosphate + CO2 + NADH. The protein operates within cofactor biosynthesis; pyridoxine 5'-phosphate biosynthesis; pyridoxine 5'-phosphate from D-erythrose 4-phosphate: step 4/5. Its function is as follows. Catalyzes the NAD(P)-dependent oxidation of 4-(phosphooxy)-L-threonine (HTP) into 2-amino-3-oxo-4-(phosphooxy)butyric acid which spontaneously decarboxylates to form 3-amino-2-oxopropyl phosphate (AHAP). This is 4-hydroxythreonine-4-phosphate dehydrogenase from Pseudoalteromonas atlantica (strain T6c / ATCC BAA-1087).